Consider the following 293-residue polypeptide: ATP synthase gamma chain (293 aa).

This sequence belongs to the ATPase gamma chain family. F-type ATPases have 2 components, CF(1) - the catalytic core - and CF(0) - the membrane proton channel. CF(1) has five subunits: alpha(3), beta(3), gamma(1), delta(1), epsilon(1). CF(0) has three main subunits: a, b and c.

It localises to the cell inner membrane. Its function is as follows. Produces ATP from ADP in the presence of a proton gradient across the membrane. The gamma chain is believed to be important in regulating ATPase activity and the flow of protons through the CF(0) complex. This is ATP synthase gamma chain from Psychrobacter sp. (strain PRwf-1).